We begin with the raw amino-acid sequence, 260 residues long: DNA repair protein RecO (260 aa).

Belongs to the RecO family.

Functionally, involved in DNA repair and RecF pathway recombination. This Streptococcus suis (strain 98HAH33) protein is DNA repair protein RecO.